Here is a 319-residue protein sequence, read N- to C-terminus: Ribonucleoside-diphosphate reductase small chain (319 aa).

Fe cation-binding residues include D70, E101, and H104. Y108 is a catalytic residue. Residues E163, E197, and H200 each coordinate Fe cation. Positions 313 to 319 (FSLDVDF) are interaction with R1.

It belongs to the ribonucleoside diphosphate reductase small chain family. In terms of assembly, interacts with RNR1/OPG080 subunit. Can interact with host RNR1 supunit. Fe cation is required as a cofactor.

It carries out the reaction a 2'-deoxyribonucleoside 5'-diphosphate + [thioredoxin]-disulfide + H2O = a ribonucleoside 5'-diphosphate + [thioredoxin]-dithiol. Its function is as follows. Ribonucleoside-diphosphate reductase holoenzyme provides the precursors necessary for viral DNA synthesis. Allows virus growth in non-dividing cells. Catalyzes the biosynthesis of deoxyribonucleotides from the corresponding ribonucleotides. In Vaccinia virus (strain Ankara) (VACV), this protein is Ribonucleoside-diphosphate reductase small chain (OPG048).